We begin with the raw amino-acid sequence, 365 residues long: TD and POZ domain-containing protein 3 (365 aa).

Positions 19 to 149 constitute an MATH domain; sequence KFCYNWTISN…EDQFTICCKV (131 aa). The BTB domain occupies 188–250; it reads TDCCLLVAGH…EMMGFIYTGK (63 aa).

It belongs to the Tdpoz family.

The sequence is that of TD and POZ domain-containing protein 3 from Mus musculus (Mouse).